The chain runs to 315 residues: Glutaminase (315 aa).

7 residues coordinate substrate: Ser70, Asn120, Glu166, Asn173, Tyr197, Tyr249, and Val267.

It belongs to the glutaminase family. Homotetramer.

It carries out the reaction L-glutamine + H2O = L-glutamate + NH4(+). This is Glutaminase from Sinorhizobium fredii (strain NBRC 101917 / NGR234).